The primary structure comprises 244 residues: 1-(5-phosphoribosyl)-5-[(5-phosphoribosylamino)methylideneamino] imidazole-4-carboxamide isomerase (244 aa).

D9 (proton acceptor) is an active-site residue. D131 (proton donor) is an active-site residue.

The protein belongs to the HisA/HisF family.

It is found in the cytoplasm. It carries out the reaction 1-(5-phospho-beta-D-ribosyl)-5-[(5-phospho-beta-D-ribosylamino)methylideneamino]imidazole-4-carboxamide = 5-[(5-phospho-1-deoxy-D-ribulos-1-ylimino)methylamino]-1-(5-phospho-beta-D-ribosyl)imidazole-4-carboxamide. The protein operates within amino-acid biosynthesis; L-histidine biosynthesis; L-histidine from 5-phospho-alpha-D-ribose 1-diphosphate: step 4/9. The polypeptide is 1-(5-phosphoribosyl)-5-[(5-phosphoribosylamino)methylideneamino] imidazole-4-carboxamide isomerase (Campylobacter jejuni subsp. doylei (strain ATCC BAA-1458 / RM4099 / 269.97)).